The primary structure comprises 349 residues: Signal peptidase I (349 aa).

Helical transmembrane passes span 3–23 and 25–45; these read NLFF…LDYF and LPNT…VLWC. Residues 46 to 80 are Cytoplasmic-facing; the sequence is YHRFVVLPKRHRQVARAEQRSGKTLSEEEKAKIEP. A helical transmembrane segment spans residues 81–101; that stretch reads ISEASEFLSSLFPVLAVVFLV. Residues 102-349 lie on the Periplasmic side of the membrane; the sequence is RSFLFEPFQI…RFERFFTAIK (248 aa). Catalysis depends on residues S115 and K196.

Belongs to the peptidase S26 family.

The protein localises to the cell inner membrane. The enzyme catalyses Cleavage of hydrophobic, N-terminal signal or leader sequences from secreted and periplasmic proteins.. This is Signal peptidase I (lepB) from Haemophilus influenzae (strain ATCC 51907 / DSM 11121 / KW20 / Rd).